Consider the following 409-residue polypeptide: Growth-regulating factor 8 (409 aa).

2 stretches are compositionally biased toward gly residues: residues 1-10 and 27-36; these read MLSSCGGHGH and QQGGGGGGGQ. The segment at 1 to 81 is disordered; that stretch reads MLSSCGGHGH…GGGGQMLSFS (81 aa). The span at 56–68 shows a compositional bias: low complexity; sequence SSSSFLGSTSSSC. The region spanning 107 to 142 is the QLQ domain; it reads PFTPTQWMELEHQALIYKHIAANVSVPSSLLLPIRR. The region spanning 158–202 is the WRC domain; that stretch reads DVEPRRCRRTDGKKWRCSRDAVGDQKYCERHINRGRHRSRKHVEG. 2 short sequence motifs (bipartite nuclear localization signal) span residues 163-173 and 191-198; these read RCRRTDGKKWR and RGRHRSRK. The interval 221 to 242 is disordered; it reads SSRGHTVARQKQVKGSAATVSD.

Belongs to the GRF family.

Its subcellular location is the nucleus. In terms of biological role, transcription activator that plays a regulatory role in gibberellin-induced stem elongation. The polypeptide is Growth-regulating factor 8 (GRF8) (Oryza sativa subsp. japonica (Rice)).